Here is a 487-residue protein sequence, read N- to C-terminus: Glycogen synthase (487 aa).

ADP-alpha-D-glucose is bound at residue K20.

Belongs to the glycosyltransferase 1 family. Bacterial/plant glycogen synthase subfamily.

The catalysed reaction is [(1-&gt;4)-alpha-D-glucosyl](n) + ADP-alpha-D-glucose = [(1-&gt;4)-alpha-D-glucosyl](n+1) + ADP + H(+). It participates in glycan biosynthesis; glycogen biosynthesis. Synthesizes alpha-1,4-glucan chains using ADP-glucose. This chain is Glycogen synthase, found in Aliivibrio fischeri (strain ATCC 700601 / ES114) (Vibrio fischeri).